The following is a 294-amino-acid chain: N-acetylmuramic acid 6-phosphate etherase (294 aa).

Residues 56 to 219 (TSQALKKGGR…STLSMVSVGK (164 aa)) enclose the SIS domain. E84 (proton donor) is an active-site residue. Residue E115 is part of the active site.

This sequence belongs to the GCKR-like family. MurNAc-6-P etherase subfamily. As to quaternary structure, homodimer.

It carries out the reaction N-acetyl-D-muramate 6-phosphate + H2O = N-acetyl-D-glucosamine 6-phosphate + (R)-lactate. Its pathway is amino-sugar metabolism; 1,6-anhydro-N-acetylmuramate degradation. The protein operates within amino-sugar metabolism; N-acetylmuramate degradation. It participates in cell wall biogenesis; peptidoglycan recycling. Functionally, specifically catalyzes the cleavage of the D-lactyl ether substituent of MurNAc 6-phosphate, producing GlcNAc 6-phosphate and D-lactate. Together with AnmK, is also required for the utilization of anhydro-N-acetylmuramic acid (anhMurNAc) either imported from the medium or derived from its own cell wall murein, and thus plays a role in cell wall recycling. The protein is N-acetylmuramic acid 6-phosphate etherase of Francisella philomiragia subsp. philomiragia (strain ATCC 25017 / CCUG 19701 / FSC 153 / O#319-036).